Here is a 144-residue protein sequence, read N- to C-terminus: Acylphosphatase-like protein MJ1331 (144 aa).

Residues 8–100 (TYELRIYGNV…FPNGLNKIST (93 aa)) enclose the Acylphosphatase-like domain.

In Methanocaldococcus jannaschii (strain ATCC 43067 / DSM 2661 / JAL-1 / JCM 10045 / NBRC 100440) (Methanococcus jannaschii), this protein is Acylphosphatase-like protein MJ1331.